A 706-amino-acid polypeptide reads, in one-letter code: MQLLCVFCLVLLWEVGAASLSEVKLHLDIEGHASHYTIPWTELMAKVPGLSPEALWREANVTEDLASMLNRYKLIYKTSGTLGIALAEPVDIPAVSEGSMQVDASKVHPGVISGLNSPACMLSAPLEKQLFYYIGTMLPNTRPHSYVFYQLRCHLSYVALSINGDKFQYTGAMTSKFLMGTYKRVTEKGDEHVLSLVFGKTKDLPDLRGPFSYPSLTSAQSGDYSLVIVTTFVHYANFHNYFVPNLKDMFSRAVTMTAASYARYVLQKLVLLEMKGGCREPELDTETLTTMFEVSVAFFKVGHAVGETGNGCVDLRWLAKSFFELTVLKDIIGICYGATVKGMQSYGLERLAAMLMATVKMEELGHLTTEKQEYALRLATVGYPKAGVYSGLIGGATSVLLSAYNRHPLFQPLHTVMRETLFIGSHVVLRELRLNVTTQGPNLALYQLLSTALCSALEIGEVLRGLALGTESGLFSPCYLSLRFDLTRDKLLSMAPQEATLDQAAVSNAVDGFLGRLSLEREDRDAWHLPAYKCVDRLDKVLMIIPLINVTFIISSDREVRGSALYEASTTYLSSSLFLSPVIMNKCSQGAVAGEPRQIPKIQNFTRTQKSCIFCGFALLSYDEKEGLETTTYITSQEVQNSILSSNYFDFDNLHVHYLLLTTNGTVMEIAGLYEERAHVVLAIILYFIAFALGIFLVHKIVMFFL.

Residues 1-18 (MQLLCVFCLVLLWEVGAA) form the signal peptide. At 19–682 (SLSEVKLHLD…LYEERAHVVL (664 aa)) the chain is on the virion surface side. An N-linked (GlcNAc...) asparagine; by host glycan is attached at Asn-60. Cystine bridges form between Cys-120–Cys-312 and Cys-278–Cys-335. The tract at residues 165 to 229 (DKFQYTGAMT…QSGDYSLVIV (65 aa)) is interaction with gL. N-linked (GlcNAc...) asparagine; by host glycosylation occurs at Asn-435. Disulfide bonds link Cys-454-Cys-478 and Cys-534-Cys-587. Residues Asn-549 and Asn-604 are each glycosylated (N-linked (GlcNAc...) asparagine; by host). Cysteines 612 and 615 form a disulfide. Asn-664 is a glycosylation site (N-linked (GlcNAc...) asparagine; by host). The helical transmembrane segment at 683-703 (AIILYFIAFALGIFLVHKIVM) threads the bilayer. Residues 704-706 (FFL) lie on the Intravirion side of the membrane.

It belongs to the herpesviridae glycoprotein H family. Interacts with glycoprotein L (gL); this interaction is necessary for the correct processing and cell surface expression of gH. The heterodimer gH/gL seems to interact with gB trimers during fusion. The heterodimer gH/gL interacts with host EPHA2 to facilitate virus internalization and fusion. Interacts with glycoprotein 42/BZLF2. Post-translationally, N-glycosylated, O-glycosylated, and sialylated.

The protein localises to the virion membrane. It localises to the host cell membrane. The protein resides in the host endosome membrane. In terms of biological role, the heterodimer glycoprotein H-glycoprotein L is required for the fusion of viral and plasma membranes leading to virus entry into the host cell. Following initial binding to host receptor, membrane fusion is mediated by the fusion machinery composed of gB and the heterodimer gH/gL. May also be involved in the fusion between the virion envelope and the outer nuclear membrane during virion morphogenesis. The heterodimer gH/gL targets also host EPHA2 to promote viral entry. This is Envelope glycoprotein H from Homo sapiens (Human).